Reading from the N-terminus, the 328-residue chain is Tetraacyldisaccharide 4'-kinase (328 aa).

Residue 55-62 participates in ATP binding; that stretch reads TAGGNGKT.

It belongs to the LpxK family.

It catalyses the reaction lipid A disaccharide (E. coli) + ATP = lipid IVA (E. coli) + ADP + H(+). It functions in the pathway glycolipid biosynthesis; lipid IV(A) biosynthesis; lipid IV(A) from (3R)-3-hydroxytetradecanoyl-[acyl-carrier-protein] and UDP-N-acetyl-alpha-D-glucosamine: step 6/6. Transfers the gamma-phosphate of ATP to the 4'-position of a tetraacyldisaccharide 1-phosphate intermediate (termed DS-1-P) to form tetraacyldisaccharide 1,4'-bis-phosphate (lipid IVA). This chain is Tetraacyldisaccharide 4'-kinase (lpxK), found in Escherichia coli (strain K12).